An 865-amino-acid chain; its full sequence is Bifunctional uridylyltransferase/uridylyl-removing enzyme (865 aa).

A uridylyltransferase region spans residues 1 to 318; the sequence is MPHVDLNPLK…FPRPDSDARL (318 aa). The segment at 319 to 675 is uridylyl-removing; sequence IDDDFRNLRE…VRPTEHGEGL (357 aa). The HD domain maps to 437–559; the sequence is VDQHTLAVVR…VGDERRLAAL (123 aa). 2 consecutive ACT domains span residues 676 to 762 and 789 to 865; these read QVMV…RLPH and RLSV…QQAA. A disordered region spans residues 747–767; the sequence is DPHAARHAHAPRRLPHSHARR. Positions 751-767 are enriched in basic residues; sequence ARHAHAPRRLPHSHARR.

The protein belongs to the GlnD family. Mg(2+) serves as cofactor.

The enzyme catalyses [protein-PII]-L-tyrosine + UTP = [protein-PII]-uridylyl-L-tyrosine + diphosphate. It carries out the reaction [protein-PII]-uridylyl-L-tyrosine + H2O = [protein-PII]-L-tyrosine + UMP + H(+). Its activity is regulated as follows. Uridylyltransferase (UTase) activity is inhibited by glutamine, while glutamine activates uridylyl-removing (UR) activity. Its function is as follows. Modifies, by uridylylation and deuridylylation, the PII regulatory proteins (GlnB and homologs), in response to the nitrogen status of the cell that GlnD senses through the glutamine level. Under low glutamine levels, catalyzes the conversion of the PII proteins and UTP to PII-UMP and PPi, while under higher glutamine levels, GlnD hydrolyzes PII-UMP to PII and UMP (deuridylylation). Thus, controls uridylylation state and activity of the PII proteins, and plays an important role in the regulation of nitrogen assimilation and metabolism. The chain is Bifunctional uridylyltransferase/uridylyl-removing enzyme from Bordetella bronchiseptica (strain ATCC BAA-588 / NCTC 13252 / RB50) (Alcaligenes bronchisepticus).